Here is a 109-residue protein sequence, read N- to C-terminus: Large ribosomal subunit protein P1A (109 aa).

Residues 69–84 show a composition bias toward low complexity; that stretch reads APVAGGAAAPAAADGE. Positions 69–109 are disordered; it reads APVAGGAAAPAAADGEAPAEEKEEAKEEEESDEDMGFGLFD. Over residues 94–103 the composition is skewed to acidic residues; that stretch reads KEEEESDEDM.

The protein belongs to the eukaryotic ribosomal protein P1/P2 family. In terms of assembly, component of the large ribosomal subunit (LSU). Mature yeast ribosomes consist of a small (40S) and a large (60S) subunit. The 40S small subunit contains 1 molecule of ribosomal RNA (18S rRNA) and at least 33 different proteins. The large 60S subunit contains 3 rRNA molecules (25S, 5.8S and 5S rRNA) and at least 46 different proteins. The acidic ribosomal P-proteins form the stalk structure of the 60S subunit. They are organized as a pentameric complex in which uL10/P0 interacts with 2 heterodimers of P1 and P2 proteins.

It is found in the cytoplasm. In terms of biological role, component of the ribosome, a large ribonucleoprotein complex responsible for the synthesis of proteins in the cell. The small ribosomal subunit (SSU) binds messenger RNAs (mRNAs) and translates the encoded message by selecting cognate aminoacyl-transfer RNA (tRNA) molecules. The large subunit (LSU) contains the ribosomal catalytic site termed the peptidyl transferase center (PTC), which catalyzes the formation of peptide bonds, thereby polymerizing the amino acids delivered by tRNAs into a polypeptide chain. The nascent polypeptides leave the ribosome through a tunnel in the LSU and interact with protein factors that function in enzymatic processing, targeting, and the membrane insertion of nascent chains at the exit of the ribosomal tunnel. The protein is Large ribosomal subunit protein P1A (rpp101) of Schizosaccharomyces pombe (strain 972 / ATCC 24843) (Fission yeast).